A 1342-amino-acid polypeptide reads, in one-letter code: ATP-dependent RNA helicase TDRD9 (1342 aa).

A compositionally biased stretch (basic and acidic residues) spans 31–63 (KAEAEDNATEVRSDKAFSELSSPEKEKSDDGNQ). The interval 31-81 (KAEAEDNATEVRSDKAFSELSSPEKEKSDDGNQRRKRAQLPTGPGTSPPSL) is disordered. The Helicase ATP-binding domain occupies 99 to 265 (VSLIENNSVV…FGSPIRNQMN (167 aa)). 112–119 (GATGSGKT) provides a ligand contact to ATP. Residues 211–214 (DEVH) carry the DEAH box motif. Residues 317–503 (SLIQSFDEME…LLKVKLLDMG (187 aa)) form the Helicase C-terminal domain. The 62-residue stretch at 901-962 (SLYPNLLCVA…RELPSDLMTP (62 aa)) folds into the Tudor domain.

The protein belongs to the DEAD box helicase family. DEAH subfamily.

Its subcellular location is the cytoplasm. The protein localises to the nucleus. The catalysed reaction is ATP + H2O = ADP + phosphate + H(+). Functionally, ATP-binding RNA helicase which plays a central role during spermatogenesis by repressing transposable elements and preventing their mobilization, which is essential for the germline integrity. Acts via the piRNA metabolic process, which mediates the repression of transposable elements during meiosis by forming complexes composed of piRNAs and Piwi proteins and governs the methylation and subsequent repression of transposons. Acts downstream of piRNA biogenesis: exclusively required for transposon silencing in the nucleus, suggesting that it acts as a nuclear effector in the nucleus together with piwil4. The protein is ATP-dependent RNA helicase TDRD9 of Danio rerio (Zebrafish).